The following is a 209-amino-acid chain: Large ribosomal subunit protein uL3 (209 aa).

The tract at residues Asn127–Met166 is disordered.

Belongs to the universal ribosomal protein uL3 family. In terms of assembly, part of the 50S ribosomal subunit. Forms a cluster with proteins L14 and L19.

One of the primary rRNA binding proteins, it binds directly near the 3'-end of the 23S rRNA, where it nucleates assembly of the 50S subunit. The sequence is that of Large ribosomal subunit protein uL3 from Chlorobium phaeovibrioides (strain DSM 265 / 1930) (Prosthecochloris vibrioformis (strain DSM 265)).